Here is a 676-residue protein sequence, read N- to C-terminus: Long-chain-fatty-acid--CoA ligase 1 (676 aa).

246–257 (YTSGSTGLPKGV) contributes to the ATP binding site. The FACS motif lies at 511–560 (DGWFRTGDVGELTPEGLLRIIDRKKNLVKTQNGEYIALEKLESRYRTSSL).

It belongs to the ATP-dependent AMP-binding enzyme family. Requires Mg(2+) as cofactor.

The enzyme catalyses a long-chain fatty acid + ATP + CoA = a long-chain fatty acyl-CoA + AMP + diphosphate. Its function is as follows. Esterification, concomitant with transport, of exogenous long-chain fatty acids into metabolically active CoA thioesters for subsequent degradation or incorporation into phospholipids. It may supplement intracellular myristoyl-CoA pools from exogenous myristate. Preferentially acts on C12:0-C16:0 fatty acids with myristic and pentadecanic acid (C15:0) having the highest activities. Appears to play a role in the maintenance of cell viability during stationary phase. In Schizosaccharomyces pombe (strain 972 / ATCC 24843) (Fission yeast), this protein is Long-chain-fatty-acid--CoA ligase 1 (lcf1).